The sequence spans 1305 residues: ABC transporter FPSE_09185 (1305 aa).

N-linked (GlcNAc...) asparagine glycosylation is present at Asn28. 6 helical membrane-spanning segments follow: residues 44–64 (FCVY…MPLM), 99–119 (LYIV…KFCF), 172–192 (RLGT…VAFT), 199–219 (IVSA…VPIY), 277–297 (IIGA…GLAF), and 312–332 (VGVV…FSYL). The 301-residue stretch at 48–348 (VVGALASIGV…ISQAMVAATE (301 aa)) folds into the ABC transmembrane type-1 1 domain. The 292-residue stretch at 372-663 (LIFKDVTFEY…ENGVYYSLVE (292 aa)) folds into the ABC transporter 1 domain. 407–414 (GPSGSGKS) provides a ligand contact to ATP. A disordered region spans residues 434-454 (EAATPRSSKEGERDNHDERKY). Basic and acidic residues predominate over residues 440-454 (SSKEGERDNHDERKY). N-linked (GlcNAc...) asparagine glycosylation is found at Asn468, Asn507, and Asn525. The next 6 helical transmembrane spans lie at 737–757 (FLLI…QAWL), 780–800 (GFMW…QCWI), 851–873 (GVFG…CLII), 877–899 (FGWK…SGFW), 964–984 (AVIF…ILWY), and 999–1019 (FMVS…ILGV). One can recognise an ABC transmembrane type-1 2 domain in the interval 738 to 1025 (LLITIASMGV…ILGVAPSAAQ (288 aa)). Positions 1038–1057 (DSNRSSQEAEKSGPTVEDTD) are disordered. Asn1040, Asn1066, and Asn1075 each carry an N-linked (GlcNAc...) asparagine glycan. The region spanning 1062–1300 (IELCNVSFKY…RGIYWDMCQT (239 aa)) is the ABC transporter 2 domain. Position 1096–1103 (1096–1103 (GPSGCGKT)) interacts with ATP. N-linked (GlcNAc...) asparagine glycosylation occurs at Asn1125.

It belongs to the ABC transporter superfamily. ABCB family. Multidrug resistance exporter (TC 3.A.1.201) subfamily.

It is found in the membrane. Functionally, ABC transporter; part of the gene cluster that mediates the biosynthesis of the lipopeptides W493 A and B. W493 A and B consist of six amino acid residues D-allo-thr, L-Ala, D-Ala, L-Gln, D-Tyr, and L-Val/L-Ile linked to a 3-hydroxy-4-methyltetradecanoic acid polyketide chain. May be involved in excretion or internal transport of W493 A and B. The chain is ABC transporter FPSE_09185 from Fusarium pseudograminearum (strain CS3096) (Wheat and barley crown-rot fungus).